We begin with the raw amino-acid sequence, 246 residues long: U11/U12 small nuclear ribonucleoprotein 35 kDa protein (246 aa).

Positions 51–129 constitute an RRM domain; it reads LTLFVARLNL…HEIFVDYELE (79 aa). Residue K172 forms a Glycyl lysine isopeptide (Lys-Gly) (interchain with G-Cter in SUMO2) linkage. The segment at 187–217 is disordered; the sequence is SRSRERHWDSRTRDRDHDRGREKRWQEREPT. The segment covering 192–217 has biased composition (basic and acidic residues); sequence RHWDSRTRDRDHDRGREKRWQEREPT.

Component of the U11/U12 snRNPs that are part of the U12-type spliceosome. As to expression, expressed in heart, liver, skeletal muscle and pancreas.

The protein localises to the nucleus. The polypeptide is U11/U12 small nuclear ribonucleoprotein 35 kDa protein (SNRNP35) (Homo sapiens (Human)).